Reading from the N-terminus, the 780-residue chain is Ral guanine nucleotide dissociation stimulator-like 2 (780 aa).

The disordered stretch occupies residues Met1–Arg92. Ser13 carries the phosphoserine modification. Over residues Gly31–Gly42 the composition is skewed to gly residues. The span at Gln43–Gly65 shows a compositional bias: acidic residues. One can recognise an N-terminal Ras-GEF domain in the interval Ser89 to Arg213. The region spanning Leu244 to Pro516 is the Ras-GEF domain. The segment covering His596–Pro613 has biased composition (low complexity). Disordered regions lie at residues His596–Asp651 and Thr741–Lys769. The Ras-associating domain maps to Asp651–Arg738. The segment covering Thr741–Ser758 has biased composition (low complexity).

In terms of assembly, interacts with SAMD9.

Functionally, probable guanine nucleotide exchange factor. Putative effector of Ras and/or Rap. Associates with the GTP-bound form of Rap 1A and H-Ras in vitro. The polypeptide is Ral guanine nucleotide dissociation stimulator-like 2 (RGL2) (Canis lupus familiaris (Dog)).